The following is a 111-amino-acid chain: Gene 81 protein (111 aa).

In Mycobacterium (Mycobacteriophage L5), this protein is Gene 81 protein (81).